The primary structure comprises 80 residues: Translation initiation factor IF-1 (80 aa).

The S1-like domain occupies 6–80 (EKKKKDESDS…TSRGRIVYRR (75 aa)).

The protein belongs to the IF-1 family. Component of the 30S ribosomal translation pre-initiation complex which assembles on the 30S ribosome in the order IF-2 and IF-3, IF-1 and N-formylmethionyl-tRNA(fMet); mRNA recruitment can occur at any time during PIC assembly.

Its subcellular location is the cytoplasm. Its function is as follows. One of the essential components for the initiation of protein synthesis. Stabilizes the binding of IF-2 and IF-3 on the 30S subunit to which N-formylmethionyl-tRNA(fMet) subsequently binds. Helps modulate mRNA selection, yielding the 30S pre-initiation complex (PIC). Upon addition of the 50S ribosomal subunit IF-1, IF-2 and IF-3 are released leaving the mature 70S translation initiation complex. This Deinococcus radiodurans (strain ATCC 13939 / DSM 20539 / JCM 16871 / CCUG 27074 / LMG 4051 / NBRC 15346 / NCIMB 9279 / VKM B-1422 / R1) protein is Translation initiation factor IF-1.